The sequence spans 326 residues: Alkanal monooxygenase beta chain (326 aa).

This sequence belongs to the bacterial luciferase oxidoreductase family. As to quaternary structure, heterodimer of an alpha and a beta chain.

It carries out the reaction a long-chain fatty aldehyde + FMNH2 + O2 = a long-chain fatty acid + hnu + FMN + H2O + 2 H(+). In terms of biological role, light-emitting reaction in luminous bacteria. The specific role of the beta subunit is unknown, but it is absolutely required for bioluminescence activity. This Aliivibrio fischeri (Vibrio fischeri) protein is Alkanal monooxygenase beta chain (luxB).